Consider the following 284-residue polypeptide: Diaminopimelate epimerase (284 aa).

Positions 14 and 67 each coordinate substrate. Cys-76 functions as the Proton donor in the catalytic mechanism. Substrate is bound by residues 77-78, Asn-166, Asn-199, and 217-218; these read GN and ER. The active-site Proton acceptor is Cys-226. 227-228 is a binding site for substrate; that stretch reads GT.

This sequence belongs to the diaminopimelate epimerase family. As to quaternary structure, homodimer.

It localises to the cytoplasm. The catalysed reaction is (2S,6S)-2,6-diaminopimelate = meso-2,6-diaminopimelate. It participates in amino-acid biosynthesis; L-lysine biosynthesis via DAP pathway; DL-2,6-diaminopimelate from LL-2,6-diaminopimelate: step 1/1. Functionally, catalyzes the stereoinversion of LL-2,6-diaminopimelate (L,L-DAP) to meso-diaminopimelate (meso-DAP), a precursor of L-lysine and an essential component of the bacterial peptidoglycan. The protein is Diaminopimelate epimerase of Bacillus velezensis (strain DSM 23117 / BGSC 10A6 / LMG 26770 / FZB42) (Bacillus amyloliquefaciens subsp. plantarum).